Here is a 198-residue protein sequence, read N- to C-terminus: Zinc finger protein 41 homolog (198 aa).

The segment covering 1–12 (MEKPAGRKKKTP) has biased composition (basic residues). The disordered stretch occupies residues 1-55 (MEKPAGRKKKTPTPREEADVQKSALREEKVSGDRKPPERPTVPRKPRTEPCLSPE). Basic and acidic residues predominate over residues 13–38 (TPREEADVQKSALREEKVSGDRKPPE). C2H2-type zinc fingers lie at residues 87–109 (YECS…QRVH), 115–137 (FKCA…QRTH), 143–165 (FKCG…QKTH), and 171–193 (YECT…QKRH).

The protein belongs to the krueppel C2H2-type zinc-finger protein family.

The protein resides in the nucleus. In terms of biological role, a putative DNA-binding regulatory protein associated with meiosis in spermatogenesis. This chain is Zinc finger protein 41 homolog (ZFP41), found in Homo sapiens (Human).